Here is a 175-residue protein sequence, read N- to C-terminus: Phytochrome-interacting ankyrin-repeat protein 1 (175 aa).

ANK repeat units follow at residues 30-59 (RGWT…DVNA), 67-96 (KGMT…NMEA), and 102-131 (CGWT…FLPD).

Interacts with phytochrome A (PHYA), both in Pr and Pfr forms.

It is found in the cytoplasm. It localises to the nucleus. The protein localises to the mitochondrion. The chain is Phytochrome-interacting ankyrin-repeat protein 1 from Arabidopsis thaliana (Mouse-ear cress).